The sequence spans 293 residues: MTDSTRSLRNCLAPAKLNLFLHITGRRPNGYHDLQSVFQLLNWGDTLHFTRRDDGRVARVTDVPGVPEESDLVVRAANLLKAHTDTAHGVDIEIDKILPMGAGLGGGSSDAATTLLALNRLWQLDLPRAELQSLAVKLGADVPFFIFGKNAFAEGIGEELAEVELPTRWFLVVTPRVHVPTAEIFSDELLTRDTKPVTIADFLAQQTSDAEWPDSFGRNDMQEVVTRKYAEVAQVVKWLYDVTPARMTGSGASVFAAFHSKHEAEAAKAKLPASWNGAVAESLNEHPLFAFAS.

K16 is a catalytic residue. 99–109 (PMGAGLGGGSS) contacts ATP. The active site involves D141.

Belongs to the GHMP kinase family. IspE subfamily.

It catalyses the reaction 4-CDP-2-C-methyl-D-erythritol + ATP = 4-CDP-2-C-methyl-D-erythritol 2-phosphate + ADP + H(+). It functions in the pathway isoprenoid biosynthesis; isopentenyl diphosphate biosynthesis via DXP pathway; isopentenyl diphosphate from 1-deoxy-D-xylulose 5-phosphate: step 3/6. In terms of biological role, catalyzes the phosphorylation of the position 2 hydroxy group of 4-diphosphocytidyl-2C-methyl-D-erythritol. The polypeptide is 4-diphosphocytidyl-2-C-methyl-D-erythritol kinase (Burkholderia cenocepacia (strain HI2424)).